A 211-amino-acid polypeptide reads, in one-letter code: ATP phosphoribosyltransferase (211 aa).

This sequence belongs to the ATP phosphoribosyltransferase family. Short subfamily. Heteromultimer composed of HisG and HisZ subunits.

The protein localises to the cytoplasm. It catalyses the reaction 1-(5-phospho-beta-D-ribosyl)-ATP + diphosphate = 5-phospho-alpha-D-ribose 1-diphosphate + ATP. Its pathway is amino-acid biosynthesis; L-histidine biosynthesis; L-histidine from 5-phospho-alpha-D-ribose 1-diphosphate: step 1/9. Functionally, catalyzes the condensation of ATP and 5-phosphoribose 1-diphosphate to form N'-(5'-phosphoribosyl)-ATP (PR-ATP). Has a crucial role in the pathway because the rate of histidine biosynthesis seems to be controlled primarily by regulation of HisG enzymatic activity. This chain is ATP phosphoribosyltransferase, found in Pseudomonas fluorescens (strain SBW25).